The chain runs to 82 residues: ATP synthase subunit c, chloroplastic (82 aa).

2 helical membrane-spanning segments follow: residues 4-24 (IISA…AIGP) and 57-77 (LAFM…LLFA).

The protein belongs to the ATPase C chain family. As to quaternary structure, F-type ATPases have 2 components, F(1) - the catalytic core - and F(0) - the membrane proton channel. F(1) has five subunits: alpha(3), beta(3), gamma(1), delta(1), epsilon(1). F(0) has four main subunits: a(1), b(1), b'(1) and c(10-14). The alpha and beta chains form an alternating ring which encloses part of the gamma chain. F(1) is attached to F(0) by a central stalk formed by the gamma and epsilon chains, while a peripheral stalk is formed by the delta, b and b' chains.

It is found in the plastid. The protein localises to the chloroplast thylakoid membrane. In terms of biological role, f(1)F(0) ATP synthase produces ATP from ADP in the presence of a proton or sodium gradient. F-type ATPases consist of two structural domains, F(1) containing the extramembraneous catalytic core and F(0) containing the membrane proton channel, linked together by a central stalk and a peripheral stalk. During catalysis, ATP synthesis in the catalytic domain of F(1) is coupled via a rotary mechanism of the central stalk subunits to proton translocation. Functionally, key component of the F(0) channel; it plays a direct role in translocation across the membrane. A homomeric c-ring of between 10-14 subunits forms the central stalk rotor element with the F(1) delta and epsilon subunits. The chain is ATP synthase subunit c, chloroplastic from Antithamnion sp. (Red alga).